A 494-amino-acid chain; its full sequence is Glutamyl-tRNA(Gln) amidotransferase subunit A (494 aa).

Catalysis depends on charge relay system residues K72 and S147. Residue S171 is the Acyl-ester intermediate of the active site.

The protein belongs to the amidase family. GatA subfamily. As to quaternary structure, heterotrimer of A, B and C subunits.

The enzyme catalyses L-glutamyl-tRNA(Gln) + L-glutamine + ATP + H2O = L-glutaminyl-tRNA(Gln) + L-glutamate + ADP + phosphate + H(+). In terms of biological role, allows the formation of correctly charged Gln-tRNA(Gln) through the transamidation of misacylated Glu-tRNA(Gln) in organisms which lack glutaminyl-tRNA synthetase. The reaction takes place in the presence of glutamine and ATP through an activated gamma-phospho-Glu-tRNA(Gln). This Methylacidiphilum infernorum (isolate V4) (Methylokorus infernorum (strain V4)) protein is Glutamyl-tRNA(Gln) amidotransferase subunit A.